The chain runs to 1232 residues: Dynactin subunit 1 (1232 aa).

Residues 31–73 (GATLFATGKWVGVILDDSKGKNDGTVQGRRYFTCEENHGIFVR) form the CAP-Gly domain. Disordered regions lie at residues 82–183 (DGAD…AQVK) and 339–358 (SASE…KKNT). A compositionally biased stretch (low complexity) spans 86 to 95 (TTSPETPEPT). A compositionally biased stretch (polar residues) spans 108–117 (PKSSKLPTRP). Residues 118-130 (SSSAASSGTASAS) are compositionally biased toward low complexity. Positions 133 to 144 (EISSSEPSTPAQ) are enriched in polar residues. The segment covering 146–163 (PLAAPIIPSPSSAITSPV) has biased composition (low complexity). Coiled-coil stretches lie at residues 170 to 505 (GPSK…KEQQ), 908 to 1005 (ETVI…RTIE), 1046 to 1071 (LLLQ…LKAH), and 1136 to 1166 (AAQL…ETVS). The segment covering 172-183 (SKEEENLRAQVK) has biased composition (basic and acidic residues).

This sequence belongs to the dynactin 150 kDa subunit family. As to quaternary structure, monomer and homodimer. Subunit of dynactin, a multiprotein complex part of a tripartite complex with dynein and a adapter, such as BICDL1, BICD2 or HOOK3. The dynactin complex is built around ACTR1A/ACTB filament and consists of an actin-related filament composed of a shoulder domain, a pointed end and a barbed end. Its length is defined by its flexible shoulder domain. The soulder is composed of 2 DCTN1 subunits, 4 DCTN2 and 2 DCTN3. DCTN1/p150(glued) binds directly to microtubules and to cytoplasmic dynein.

Its subcellular location is the cytoplasm. The protein localises to the cytoskeleton. It is found in the microtubule organizing center. It localises to the centrosome. The protein resides in the centriole. Its subcellular location is the spindle. The protein localises to the cell cortex. Part of the dynactin complex that activates the molecular motor dynein for ultra-processive transport along microtubules. Plays a key role in dynein-mediated retrograde transport of vesicles and organelles along microtubules by recruiting and tethering dynein to microtubules. Binds to both dynein and microtubules providing a link between specific cargos, microtubules and dynein. Essential for targeting dynein to microtubule plus ends, recruiting dynein to membranous cargos and enhancing dynein processivity (the ability to move along a microtubule for a long distance without falling off the track). Can also act as a brake to slow the dynein motor during motility along the microtubule. Can regulate microtubule stability by promoting microtubule formation, nucleation and polymerization and by inhibiting microtubule catastrophe in neurons. Inhibits microtubule catastrophe by binding both to microtubules and to tubulin, leading to enhanced microtubule stability along the axon. Plays a role in metaphase spindle orientation. Plays a role in centriole cohesion and subdistal appendage organization and function. Its recruitment to the centriole in a KIF3A-dependent manner is essential for the maintenance of centriole cohesion and the formation of subdistal appendage. Also required for microtubule anchoring at the mother centriole. Plays a role in primary cilia formation. The chain is Dynactin subunit 1 (dctn1) from Xenopus laevis (African clawed frog).